Here is a 241-residue protein sequence, read N- to C-terminus: ATP synthase subunit a (241 aa).

5 helical membrane-spanning segments follow: residues 30 to 50, 91 to 111, 128 to 148, 193 to 213, and 214 to 234; these read GQVF…VVVG, FIGT…LVPW, INTT…AGLS, LVVA…VMFL, and GLFT…YYIG.

Belongs to the ATPase A chain family. As to quaternary structure, F-type ATPases have 2 components, CF(1) - the catalytic core - and CF(0) - the membrane proton channel. CF(1) has five subunits: alpha(3), beta(3), gamma(1), delta(1), epsilon(1). CF(0) has four main subunits: a, b, b' and c.

The protein localises to the cellular thylakoid membrane. Functionally, key component of the proton channel; it plays a direct role in the translocation of protons across the membrane. The sequence is that of ATP synthase subunit a from Prochlorococcus marinus (strain MIT 9313).